Reading from the N-terminus, the 356-residue chain is sn-glycerol-3-phosphate import ATP-binding protein UgpC (356 aa).

The ABC transporter domain maps to 4-235 (LKLQAVTKSW…PASLFVASFI (232 aa)). 37–44 (GPSGCGKS) contacts ATP.

This sequence belongs to the ABC transporter superfamily. sn-glycerol-3-phosphate importer (TC 3.A.1.1.3) family. In terms of assembly, the complex is composed of two ATP-binding proteins (UgpC), two transmembrane proteins (UgpA and UgpE) and a solute-binding protein (UgpB).

The protein localises to the cell inner membrane. The catalysed reaction is sn-glycerol 3-phosphate(out) + ATP + H2O = sn-glycerol 3-phosphate(in) + ADP + phosphate + H(+). Functionally, part of the ABC transporter complex UgpBAEC involved in sn-glycerol-3-phosphate (G3P) import. Responsible for energy coupling to the transport system. This Shigella sonnei (strain Ss046) protein is sn-glycerol-3-phosphate import ATP-binding protein UgpC.